Here is a 254-residue protein sequence, read N- to C-terminus: UPF0173 protein YddR (254 aa).

This sequence belongs to the UPF0173 family.

The sequence is that of UPF0173 protein YddR (yddR) from Bacillus subtilis (strain 168).